The chain runs to 508 residues: Hydroxymethylglutaryl-CoA synthase, mitochondrial (508 aa).

The N-terminal 37 residues, 1–37 (MQRLLTPVKRILQLTRAVQETSLTPARLLPVAHQRFS), are a transit peptide targeting the mitochondrion. Lysine 52 bears the N6-succinyllysine mark. Positions 80 and 81 each coordinate (3S)-3-hydroxy-3-methylglutaryl-CoA. Lysine 83 carries the post-translational modification N6-acetyllysine; alternate. Lysine 83 carries the post-translational modification N6-succinyllysine; alternate. Catalysis depends on glutamate 132, which acts as the Proton donor/acceptor. (3S)-3-hydroxy-3-methylglutaryl-CoA is bound by residues cysteine 166, asparagine 204, and threonine 208. Cysteine 166 functions as the Acyl-thioester intermediate in the catalytic mechanism. At lysine 221 the chain carries N6-succinyllysine. The residue at position 243 (lysine 243) is an N6-acetyllysine. Lysine 256 carries the N6-acetyllysine; alternate modification. Lysine 256 is subject to N6-succinyllysine; alternate. (3S)-3-hydroxy-3-methylglutaryl-CoA contacts are provided by serine 258 and histidine 301. Catalysis depends on histidine 301, which acts as the Proton donor/acceptor. Lysine 306 is subject to N6-acetyllysine. Position 310 (lysine 310) interacts with (3S)-3-hydroxy-3-methylglutaryl-CoA. Lysine 310 is modified (N6-acetyllysine; alternate). N6-succinyllysine; alternate is present on lysine 310. N6-succinyllysine is present on lysine 333. Residues lysine 342, lysine 350, lysine 354, and lysine 358 each carry the N6-acetyllysine; alternate modification. Residues lysine 342, lysine 350, lysine 354, and lysine 358 each carry the N6-succinyllysine; alternate modification. The (3S)-3-hydroxy-3-methylglutaryl-CoA site is built by asparagine 380 and serine 414. At serine 433 the chain carries Phosphoserine. Lysine 437 bears the N6-acetyllysine mark. Position 440 is a phosphoserine (serine 440). Lysine 447 carries the post-translational modification N6-acetyllysine; alternate. An N6-succinyllysine; alternate modification is found at lysine 447. Serine 456 bears the Phosphoserine mark. N6-acetyllysine; alternate is present on lysine 473. Residue lysine 473 is modified to N6-succinyllysine; alternate. Serine 477 is subject to Phosphoserine.

Belongs to the thiolase-like superfamily. HMG-CoA synthase family. In terms of assembly, homodimer. In terms of processing, succinylated. Desuccinylated by SIRT5. Succinylation, at least at Lys-83 and Lys-310, inhibits the enzymatic activity. Expression in liver is 200-fold higher than in any other tissue. Low expression in colon, kidney, testis, and pancreas. Very low expression in heart and skeletal muscle. Not detected in brain. As to expression, highest expression detected in heart and skeletal muscle.

It is found in the mitochondrion. The enzyme catalyses acetoacetyl-CoA + acetyl-CoA + H2O = (3S)-3-hydroxy-3-methylglutaryl-CoA + CoA + H(+). It functions in the pathway metabolic intermediate biosynthesis; (R)-mevalonate biosynthesis; (R)-mevalonate from acetyl-CoA: step 2/3. In terms of biological role, catalyzes the first irreversible step in ketogenesis, condensing acetyl-CoA to acetoacetyl-CoA to form HMG-CoA, which is converted by HMG-CoA reductase (HMGCR) into mevalonate. The protein is Hydroxymethylglutaryl-CoA synthase, mitochondrial (HMGCS2) of Homo sapiens (Human).